A 362-amino-acid polypeptide reads, in one-letter code: Large ribosomal subunit protein uL3 (362 aa).

Residues 340–362 form a disordered region; the sequence is RPPKKKPPVQRPQITYVSVESKQ. Positions 351–362 are enriched in polar residues; the sequence is PQITYVSVESKQ.

The protein belongs to the universal ribosomal protein uL3 family. In terms of assembly, part of the 50S ribosomal subunit. Forms a cluster with proteins L14 and L24e.

In terms of biological role, one of the primary rRNA binding proteins, it binds directly near the 3'-end of the 23S rRNA, where it nucleates assembly of the 50S subunit. This chain is Large ribosomal subunit protein uL3, found in Pyrococcus horikoshii (strain ATCC 700860 / DSM 12428 / JCM 9974 / NBRC 100139 / OT-3).